Consider the following 365-residue polypeptide: DNA replication and repair protein RecF (365 aa).

30–37 lines the ATP pocket; the sequence is GRNAQGKT.

Belongs to the RecF family.

The protein localises to the cytoplasm. Functionally, the RecF protein is involved in DNA metabolism; it is required for DNA replication and normal SOS inducibility. RecF binds preferentially to single-stranded, linear DNA. It also seems to bind ATP. This is DNA replication and repair protein RecF from Streptococcus pneumoniae (strain 70585).